Here is a 45-residue protein sequence, read N- to C-terminus: Large ribosomal subunit protein bL34 (45 aa).

A disordered region spans residues 1–45 (MTKRTFQPNNRRRARKHGFRARMRTRAGRAILSARRGKNRAELSA). Residues 10 to 27 (NRRRARKHGFRARMRTRA) show a composition bias toward basic residues.

Belongs to the bacterial ribosomal protein bL34 family.

This chain is Large ribosomal subunit protein bL34, found in Micrococcus luteus (strain ATCC 4698 / DSM 20030 / JCM 1464 / CCM 169 / CCUG 5858 / IAM 1056 / NBRC 3333 / NCIMB 9278 / NCTC 2665 / VKM Ac-2230) (Micrococcus lysodeikticus).